The sequence spans 351 residues: Formyl peptide receptor 2 (351 aa).

Over 1–29 the chain is Extracellular; the sequence is MESNYSIHLNGSEVVVYDSTISRVLWILS. N-linked (GlcNAc...) asparagine glycans are attached at residues N4 and N10. A helical transmembrane segment spans residues 30 to 50; the sequence is MVVVSITFFLGVLGNGLVIWV. The Cytoplasmic segment spans residues 51–61; sequence AGFRMPHTVTT. The helical transmembrane segment at 62 to 82 threads the bilayer; that stretch reads IWYLNLALADFSFTATLPFLL. The Extracellular segment spans residues 83–99; that stretch reads VEMAMKEKWPFGWFLCK. C98 and C176 are joined by a disulfide. A helical membrane pass occupies residues 100 to 120; that stretch reads LVHIVVDVNLFGSVFLIALIA. Over 121-144 the chain is Cytoplasmic; sequence LDRCICVLHPVWAQNHRTVSLARK. A helical membrane pass occupies residues 145 to 165; sequence VVVGPWIFALILTLPIFIFLT. Residues 166-205 are Extracellular-facing; that stretch reads TVRIPGGDVYCTFNFGSWAQTDEEKLNTAITFVTTRGIIR. The chain crosses the membrane as a helical span at residues 206-226; sequence FLIGFSMPMSIVAVCYGLIAV. Over 227-241 the chain is Cytoplasmic; the sequence is KINRRNLVNSSRPLR. The helical transmembrane segment at 242–262 threads the bilayer; that stretch reads VLTAVVASFFICWFPFQLVAL. Over 263–282 the chain is Extracellular; the sequence is LGTVWFKETLLSGSYKILDM. The chain crosses the membrane as a helical span at residues 283–305; sequence FVNPTSSLAYFNSCLNPMLYVFM. Topologically, residues 306 to 351 are cytoplasmic; sequence GQDFRERFIHSLPYSLERALSEDSGQTSDSSTSSTSPPADIELKAP. The disordered stretch occupies residues 325 to 351; sequence LSEDSGQTSDSSTSSTSPPADIELKAP. Residues 327 to 341 show a composition bias toward low complexity; that stretch reads EDSGQTSDSSTSSTS.

It belongs to the G-protein coupled receptor 1 family. As to quaternary structure, interacts with Amyloid-beta protein 42, product of APP; the interaction takes place at the cell surface and the complex is then rapidly internalized. In terms of tissue distribution, primarily expressed in neutrophils. Not detected in vomeronasal neurons.

The protein localises to the cell membrane. In terms of biological role, high affinity receptor for N-formyl-methionyl peptides (FMLP), which are powerful neutrophil chemotactic factors. Stimulates chemotaxis in immune cells to site of infection or tissue damage upon recognition of several ligands, such as FMLP, or ligand involved in cell damage, disease or inflammation. Receptor for the chemokine-like protein FAM19A5, mediating FAM19A5-stimulated macrophage chemotaxis and the inhibitory effect on TNFSF11/RANKL-induced osteoclast differentiation. The polypeptide is Formyl peptide receptor 2 (Fpr2) (Mus musculus (Mouse)).